A 141-amino-acid polypeptide reads, in one-letter code: HTH-type transcriptional repressor NsrR (141 aa).

In terms of domain architecture, HTH rrf2-type spans 2–129; that stretch reads QLTSFTDYGL…DNYTLADLVE (128 aa). Positions 28-51 form a DNA-binding region, H-T-H motif; it reads ISEVTEVYGVSRNHMVKIINQLSR. [2Fe-2S] cluster is bound by residues Cys91, Cys96, and Cys102.

[2Fe-2S] cluster is required as a cofactor.

Nitric oxide-sensitive repressor of genes involved in protecting the cell against nitrosative stress. May require iron for activity. This chain is HTH-type transcriptional repressor NsrR, found in Salmonella choleraesuis (strain SC-B67).